Consider the following 460-residue polypeptide: Solute carrier family 52, riboflavin transporter, member 3 (460 aa).

Residues 1–6 are Cytoplasmic-facing; sequence MAFLTH. Residues 7–27 traverse the membrane as a helical segment; that stretch reads LLVCVFGMGSWVAINGLWVEL. At 28-37 the chain is on the extracellular side; sequence PLLVTELPEA. Residues 38–58 traverse the membrane as a helical segment; the sequence is WYLPSYLTVVIQLANIGPLLV. Over 59–71 the chain is Cytoplasmic; sequence TLMHRFRPGCLSE. A helical transmembrane segment spans residues 72–92; that stretch reads VPVIFLILCVGTAACILLAFL. The Extracellular segment spans residues 93 to 105; the sequence is WNVTSWIQGGQHS. The N-linked (GlcNAc...) asparagine glycan is linked to N94. Residues 106 to 126 traverse the membrane as a helical segment; sequence VAFIVLTFFLALVDCTSSVTF. Over 127 to 137 the chain is Cytoplasmic; the sequence is LPFMSQLPTYY. A helical transmembrane segment spans residues 138-158; the sequence is LTTFFIGEGLSGLLPALVALV. Over 159 to 211 the chain is Extracellular; it reads QGSGITTCVNVTETPGTTLNTMETPITQGNLSPSLPSPSWHQESRYLAPRFSP. Residue N168 is glycosylated (N-linked (GlcNAc...) asparagine). The helical transmembrane segment at 212-232 threads the bilayer; sequence LLFFLLLSFLTGCCLVAFFLL. Residues 233-291 are Cytoplasmic-facing; the sequence is QRQPWGRQGSIEDLLHSQVTLHSIRPRDTEDTSSLGAPVSSPGKGSVEASVASLRPAQL. Phosphoserine is present on residues S242 and S266. Residues 292-312 form a helical membrane-spanning segment; that stretch reads AFIYSVVAFVNALTNGVLPSV. Residues 313–326 lie on the Extracellular side of the membrane; sequence QTYSCLPYGPVAYH. The helical transmembrane segment at 327–347 threads the bilayer; sequence LSATLSSVASPLACFLPIFLP. The Cytoplasmic portion of the chain corresponds to 348–350; that stretch reads NRS. Residues 351 to 371 traverse the membrane as a helical segment; it reads LLFLGVLTVLGTGFGAYNMAM. Over 372 to 387 the chain is Extracellular; it reads AAMSPCPVLQGHWGGE. C377 and C454 form a disulfide bridge. A helical transmembrane segment spans residues 388-408; sequence VLIVLSWVLFAACLSYVKVML. The Cytoplasmic portion of the chain corresponds to 409–418; it reads GVILRDRSRS. The helical transmembrane segment at 419-439 threads the bilayer; that stretch reads ALLWCGAAVQLGSLIGALLMF. Over 440-460 the chain is Extracellular; it reads PLVNVLKLFSSADYCSLDCSV.

Belongs to the riboflavin transporter family. In terms of tissue distribution, within the small intestine, it is particularly expressed in the jujenum and the ileum. Almost negligible expression in the stomach, duodenum, and large intestine.

It is found in the cell membrane. It catalyses the reaction riboflavin(in) = riboflavin(out). Functionally, plasma membrane transporter mediating the uptake by cells of the water soluble vitamin B2/riboflavin that plays a key role in biochemical oxidation-reduction reactions of the carbohydrate, lipid, and amino acid metabolism. The chain is Solute carrier family 52, riboflavin transporter, member 3 (Slc52a3) from Mus musculus (Mouse).